Consider the following 523-residue polypeptide: Cytoplasmic dynein 1 light intermediate chain 1 (523 aa).

The tract at residues 1-25 (MAAVGRVGSFGSSPPGLSSTYTGGP) is disordered. Residues 9-19 (SFGSSPPGLSS) show a composition bias toward low complexity. 74-81 (GEDGAGKT) contacts ATP. Serine 207 carries the phosphoserine modification. Residue threonine 213 is modified to Phosphothreonine. Disordered regions lie at residues 387–434 (PPTA…DPNM) and 456–523 (TGSP…GEAS). Serine 398 and serine 405 each carry phosphoserine. At threonine 408 the chain carries Phosphothreonine. 4 positions are modified to phosphoserine: serine 412, serine 419, serine 421, and serine 427. Positions 412–421 (SVSSNVASVS) are enriched in low complexity. Over residues 458–478 (SPGGPGVSGGSPAGGAGGGSS) the composition is skewed to gly residues. Serine 487 carries the post-translational modification Phosphoserine. A compositionally biased stretch (basic and acidic residues) spans 493-503 (LDVHAELDRIT). The segment covering 506 to 523 (PVTVSPTTPTSPTEGEAS) has biased composition (low complexity). Serine 510 is subject to Phosphoserine. A phosphothreonine mark is found at threonine 512, threonine 513, and threonine 515. A Phosphoserine modification is found at serine 516.

This sequence belongs to the dynein light intermediate chain family. As to quaternary structure, homodimer. The cytoplasmic dynein 1 complex consists of two catalytic heavy chains (HCs) and a number of non-catalytic subunits presented by intermediate chains (ICs), light intermediate chains (LICs) and light chains (LCs); the composition seems to vary in respect to the IC, LIC and LC composition. The heavy chain homodimer serves as a scaffold for the probable homodimeric assembly of the respective non-catalytic subunits. The ICs and LICs bind directly to the HC dimer and the LCs assemble on the IC dimer. Self-associates. Interacts with DYNC1H1; DYNC1LI1 and DYNC1LI2 bind mutually exclusive to DYNC1H1. Interacts with PCNT. Forms a complex with RAB11FIP3 and RAB11A1; the interaction between DYNC1LI1 and RAB11FIP3 is direct and induces DYNC1LI1 localization onto endosomal membrane; the complex regulates endocytic trafficking. Interacts with RUFY3. (Microbial infection) Interacts with human adenovirus 5 hexon protein; this interaction probably allows virus intracellular transport. Post-translationally, phosphorylated during mitosis but not in interphase.

It localises to the cytoplasm. The protein resides in the chromosome. It is found in the centromere. Its subcellular location is the kinetochore. The protein localises to the cytoskeleton. It localises to the spindle pole. The protein resides in the recycling endosome membrane. Functionally, acts as one of several non-catalytic accessory components of the cytoplasmic dynein 1 complex that are thought to be involved in linking dynein to cargos and to adapter proteins that regulate dynein function. Cytoplasmic dynein 1 acts as a motor for the intracellular retrograde motility of vesicles and organelles along microtubules. May play a role in binding dynein to membranous organelles or chromosomes. Probably involved in the microtubule-dependent transport of pericentrin. Is required for progress through the spindle assembly checkpoint. The phosphorylated form appears to be involved in the selective removal of MAD1L1 and MAD1L2 but not BUB1B from kinetochores. Forms a functional Rab11/RAB11FIP3/dynein complex onto endosomal membrane that regulates the movement of peripheral sorting endosomes (SE) along microtubule tracks toward the microtubule organizing center/centrosome, generating the endosomal recycling compartment (ERC). This is Cytoplasmic dynein 1 light intermediate chain 1 (DYNC1LI1) from Homo sapiens (Human).